The sequence spans 153 residues: Transcriptional repressor NrdR (153 aa).

A zinc finger lies at 3–34 (CPFCGKENTRVIDSRPADDCSSIRRRRQCDEC). The ATP-cone domain occupies 49-139 (LVVIKKDNNR…VYREFKDVNT (91 aa)).

Belongs to the NrdR family. Zn(2+) serves as cofactor.

Its function is as follows. Negatively regulates transcription of bacterial ribonucleotide reductase nrd genes and operons by binding to NrdR-boxes. This is Transcriptional repressor NrdR from Lachnoclostridium phytofermentans (strain ATCC 700394 / DSM 18823 / ISDg) (Clostridium phytofermentans).